The primary structure comprises 301 residues: Methionyl-tRNA formyltransferase (301 aa).

109 to 112 is a (6S)-5,6,7,8-tetrahydrofolate binding site; that stretch reads SLLP.

It belongs to the Fmt family.

It catalyses the reaction L-methionyl-tRNA(fMet) + (6R)-10-formyltetrahydrofolate = N-formyl-L-methionyl-tRNA(fMet) + (6S)-5,6,7,8-tetrahydrofolate + H(+). In terms of biological role, attaches a formyl group to the free amino group of methionyl-tRNA(fMet). The formyl group appears to play a dual role in the initiator identity of N-formylmethionyl-tRNA by promoting its recognition by IF2 and preventing the misappropriation of this tRNA by the elongation apparatus. The polypeptide is Methionyl-tRNA formyltransferase (Ruegeria pomeroyi (strain ATCC 700808 / DSM 15171 / DSS-3) (Silicibacter pomeroyi)).